A 672-amino-acid chain; its full sequence is Poly-beta-1,6-N-acetyl-D-glucosamine N-deacetylase (672 aa).

Residues 1-20 (MLRNGNKYLLMLVSIIMLTA) form the signal peptide. A lipid anchor (N-palmitoyl cysteine) is attached at C21. The S-diacylglycerol cysteine moiety is linked to residue C21. The region spanning 107 to 349 (KAVVLTFDDG…IQRVKDMQIS (243 aa)) is the NodB homology domain.

It belongs to the polysaccharide deacetylase family.

Its subcellular location is the cell outer membrane. In terms of biological role, catalyzes the N-deacetylation of poly-beta-1,6-N-acetyl-D-glucosamine (PGA), a biofilm adhesin polysaccharide. N-deacetylation promotes PGA export through the PgaA porin. This is Poly-beta-1,6-N-acetyl-D-glucosamine N-deacetylase (pgaB) from Escherichia coli (strain K12).